A 341-amino-acid polypeptide reads, in one-letter code: Phosphate acyltransferase (341 aa).

The protein belongs to the PlsX family. Homodimer. Probably interacts with PlsY.

It localises to the cytoplasm. It catalyses the reaction a fatty acyl-[ACP] + phosphate = an acyl phosphate + holo-[ACP]. The protein operates within lipid metabolism; phospholipid metabolism. In terms of biological role, catalyzes the reversible formation of acyl-phosphate (acyl-PO(4)) from acyl-[acyl-carrier-protein] (acyl-ACP). This enzyme utilizes acyl-ACP as fatty acyl donor, but not acyl-CoA. This is Phosphate acyltransferase from Nostoc sp. (strain PCC 7120 / SAG 25.82 / UTEX 2576).